The sequence spans 757 residues: Endonuclease MutS2 (757 aa).

An ATP-binding site is contributed by Gly321 to Thr328. The region spanning Ile681–Lys756 is the Smr domain.

Belongs to the DNA mismatch repair MutS family. MutS2 subfamily. As to quaternary structure, homodimer. Binds to stalled ribosomes, contacting rRNA.

Endonuclease that is involved in the suppression of homologous recombination and thus may have a key role in the control of bacterial genetic diversity. Functionally, acts as a ribosome collision sensor, splitting the ribosome into its 2 subunits. Detects stalled/collided 70S ribosomes which it binds and splits by an ATP-hydrolysis driven conformational change. Acts upstream of the ribosome quality control system (RQC), a ribosome-associated complex that mediates the extraction of incompletely synthesized nascent chains from stalled ribosomes and their subsequent degradation. Probably generates substrates for RQC. The protein is Endonuclease MutS2 of Thermotoga petrophila (strain ATCC BAA-488 / DSM 13995 / JCM 10881 / RKU-1).